Here is a 473-residue protein sequence, read N- to C-terminus: Serine palmitoyltransferase 1 (473 aa).

The Lumenal portion of the chain corresponds to 1-15; that stretch reads MATVAEQWVLVEMVQ. Residues 1-66 are interaction with SPTLC2; it reads MATVAEQWVL…KEELIEEWQP (66 aa). The helical transmembrane segment at 16–36 threads the bilayer; sequence ALYEAPAYHLILEGILILWII. Topologically, residues 37–473 are cytoplasmic; it reads RLLFSKTYKL…ISEVAQTVLL (437 aa). A Phosphotyrosine; by ABL modification is found at Tyr-164.

It belongs to the class-II pyridoxal-phosphate-dependent aminotransferase family. Component of the serine palmitoyltransferase (SPT) complex, which is also composed of SPTLC2 or SPTLC3 and SPTSSA or SPTSSB. The heterodimer with SPTLC2 or SPTLC3 forms the catalytic core of the enzyme, while SPTSSA or SPTSSB subunits determine substrate specificity. SPT also interacts with ORMDL proteins, especially ORMDL3, which negatively regulate SPT activity in the presence of ceramides. Forms dimers of heterodimers with SPTLC2. Interacts with RTN4. Pyridoxal 5'-phosphate serves as cofactor. Post-translationally, phosphorylation at Tyr-164 inhibits activity and promotes cell survival.

It localises to the endoplasmic reticulum membrane. The catalysed reaction is L-serine + hexadecanoyl-CoA + H(+) = 3-oxosphinganine + CO2 + CoA. It catalyses the reaction octadecanoyl-CoA + L-serine + H(+) = 3-oxoeicosasphinganine + CO2 + CoA. The enzyme catalyses tetradecanoyl-CoA + L-serine + H(+) = 3-oxohexadecasphinganine + CO2 + CoA. It carries out the reaction dodecanoyl-CoA + L-serine + H(+) = 3-oxotetradecasphinganine + CO2 + CoA. Its pathway is lipid metabolism; sphingolipid metabolism. With respect to regulation, SPT complex catalytic activity is negatively regulated by ORMDL proteins, including ORMDL3, in the presence of ceramides. This mechanism allows to maintain ceramide levels at sufficient concentrations for the production of complex sphingolipids, but which prevents the accumulation of ceramides to levels that trigger apoptosis. Component of the serine palmitoyltransferase multisubunit enzyme (SPT) that catalyzes the initial and rate-limiting step in sphingolipid biosynthesis by condensing L-serine and activated acyl-CoA (most commonly palmitoyl-CoA) to form long-chain bases. The SPT complex is also composed of SPTLC2 or SPTLC3 and SPTSSA or SPTSSB. Within this complex, the heterodimer with SPTLC2 or SPTLC3 forms the catalytic core. The composition of the serine palmitoyltransferase (SPT) complex determines the substrate preference. The SPTLC1-SPTLC2-SPTSSA complex shows a strong preference for C16-CoA substrate, while the SPTLC1-SPTLC3-SPTSSA isozyme uses both C14-CoA and C16-CoA as substrates, with a slight preference for C14-CoA. The SPTLC1-SPTLC2-SPTSSB complex shows a strong preference for C18-CoA substrate, while the SPTLC1-SPTLC3-SPTSSB isozyme displays an ability to use a broader range of acyl-CoAs, without apparent preference. Required for adipocyte cell viability and metabolic homeostasis. The sequence is that of Serine palmitoyltransferase 1 (SPTLC1) from Bos taurus (Bovine).